The sequence spans 328 residues: Phosphate acyltransferase (328 aa).

It belongs to the PlsX family. In terms of assembly, homodimer. Probably interacts with PlsY.

The protein localises to the cytoplasm. The catalysed reaction is a fatty acyl-[ACP] + phosphate = an acyl phosphate + holo-[ACP]. It participates in lipid metabolism; phospholipid metabolism. Its function is as follows. Catalyzes the reversible formation of acyl-phosphate (acyl-PO(4)) from acyl-[acyl-carrier-protein] (acyl-ACP). This enzyme utilizes acyl-ACP as fatty acyl donor, but not acyl-CoA. The polypeptide is Phosphate acyltransferase (Mycoplasmoides gallisepticum (strain R(low / passage 15 / clone 2)) (Mycoplasma gallisepticum)).